A 2959-amino-acid chain; its full sequence is uncharacterized protein (2959 aa).

The protein resides in the virion. This is an uncharacterized protein from Acanthamoeba polyphaga mimivirus (APMV).